Reading from the N-terminus, the 504-residue chain is D-alanine--D-alanyl carrier protein ligase (504 aa).

An ATP-binding site is contributed by 152-153 (TS). A D-alanine-binding site is contributed by D197. 292-297 (NTYGPT) serves as a coordination point for ATP. Residue V301 coordinates D-alanine. Residues D383, 394 to 397 (YNGR), and K492 contribute to the ATP site. K492 is a binding site for D-alanine.

It belongs to the ATP-dependent AMP-binding enzyme family. DltA subfamily.

The protein localises to the cytoplasm. It catalyses the reaction holo-[D-alanyl-carrier protein] + D-alanine + ATP = D-alanyl-[D-alanyl-carrier protein] + AMP + diphosphate. It functions in the pathway cell wall biogenesis; lipoteichoic acid biosynthesis. Functionally, catalyzes the first step in the D-alanylation of lipoteichoic acid (LTA), the activation of D-alanine and its transfer onto the D-alanyl carrier protein (Dcp) DltC. In an ATP-dependent two-step reaction, forms a high energy D-alanyl-AMP intermediate, followed by transfer of the D-alanyl residue as a thiol ester to the phosphopantheinyl prosthetic group of the Dcp. D-alanylation of LTA plays an important role in modulating the properties of the cell wall in Gram-positive bacteria, influencing the net charge of the cell wall. The chain is D-alanine--D-alanyl carrier protein ligase from Bacillus cereus (strain B4264).